We begin with the raw amino-acid sequence, 144 residues long: Large ribosomal subunit protein uL16 (144 aa).

It belongs to the universal ribosomal protein uL16 family. As to quaternary structure, part of the 50S ribosomal subunit.

Its function is as follows. Binds 23S rRNA and is also seen to make contacts with the A and possibly P site tRNAs. The protein is Large ribosomal subunit protein uL16 of Ligilactobacillus salivarius (strain UCC118) (Lactobacillus salivarius).